We begin with the raw amino-acid sequence, 189 residues long: dCTP deaminase (189 aa).

DCTP contacts are provided by residues 112 to 117 (KSTYAR), 136 to 138 (TLE), Gln-157, Tyr-171, and Gln-181. The active-site Proton donor/acceptor is the Glu-138.

Belongs to the dCTP deaminase family. Homotrimer.

The catalysed reaction is dCTP + H2O + H(+) = dUTP + NH4(+). Its pathway is pyrimidine metabolism; dUMP biosynthesis; dUMP from dCTP (dUTP route): step 1/2. In terms of biological role, catalyzes the deamination of dCTP to dUTP. This Xanthomonas oryzae pv. oryzae (strain MAFF 311018) protein is dCTP deaminase.